We begin with the raw amino-acid sequence, 207 residues long: dITP/XTP pyrophosphatase (207 aa).

16–21 (SNNKGK) is a binding site for substrate. Catalysis depends on aspartate 79, which acts as the Proton acceptor. A Mg(2+)-binding site is contributed by aspartate 79. Substrate-binding positions include serine 80, 166–169 (FGYD), lysine 189, and 194–195 (HR).

It belongs to the HAM1 NTPase family. As to quaternary structure, homodimer. The cofactor is Mg(2+).

The enzyme catalyses XTP + H2O = XMP + diphosphate + H(+). It carries out the reaction dITP + H2O = dIMP + diphosphate + H(+). It catalyses the reaction ITP + H2O = IMP + diphosphate + H(+). Its function is as follows. Pyrophosphatase that catalyzes the hydrolysis of nucleoside triphosphates to their monophosphate derivatives, with a high preference for the non-canonical purine nucleotides XTP (xanthosine triphosphate), dITP (deoxyinosine triphosphate) and ITP. Seems to function as a house-cleaning enzyme that removes non-canonical purine nucleotides from the nucleotide pool, thus preventing their incorporation into DNA/RNA and avoiding chromosomal lesions. The polypeptide is dITP/XTP pyrophosphatase (Acinetobacter baumannii (strain ATCC 17978 / DSM 105126 / CIP 53.77 / LMG 1025 / NCDC KC755 / 5377)).